Reading from the N-terminus, the 293-residue chain is Ribosomal protein L11 methyltransferase (293 aa).

Residues Thr-145, Gly-166, Asp-188, and Asn-230 each contribute to the S-adenosyl-L-methionine site.

The protein belongs to the methyltransferase superfamily. PrmA family.

Its subcellular location is the cytoplasm. It catalyses the reaction L-lysyl-[protein] + 3 S-adenosyl-L-methionine = N(6),N(6),N(6)-trimethyl-L-lysyl-[protein] + 3 S-adenosyl-L-homocysteine + 3 H(+). Functionally, methylates ribosomal protein L11. The chain is Ribosomal protein L11 methyltransferase from Shewanella baltica (strain OS223).